The chain runs to 328 residues: Ferredoxin--NADP reductase 1 (328 aa).

FAD contacts are provided by E37, K45, Y49, V89, and T310.

Belongs to the ferredoxin--NADP reductase type 2 family. Homodimer. FAD serves as cofactor.

The catalysed reaction is 2 reduced [2Fe-2S]-[ferredoxin] + NADP(+) + H(+) = 2 oxidized [2Fe-2S]-[ferredoxin] + NADPH. This Latilactobacillus sakei subsp. sakei (strain 23K) (Lactobacillus sakei subsp. sakei) protein is Ferredoxin--NADP reductase 1.